The sequence spans 108 residues: Nucleoid-associated protein PLES_37951 (108 aa).

Disordered stretches follow at residues 1–25 and 87–108; these read MMKG…KMQE and NQEK…KMPF. Positions 87 to 98 are enriched in polar residues; it reads NQEKMSGFTSGM.

It belongs to the YbaB/EbfC family. In terms of assembly, homodimer.

The protein resides in the cytoplasm. It is found in the nucleoid. In terms of biological role, binds to DNA and alters its conformation. May be involved in regulation of gene expression, nucleoid organization and DNA protection. The chain is Nucleoid-associated protein PLES_37951 from Pseudomonas aeruginosa (strain LESB58).